The primary structure comprises 326 residues: ATP-dependent 6-phosphofructokinase 2 (326 aa).

G14 lines the ATP pocket. An ADP-binding site is contributed by 24–28 (RAVTR). Residues 75–76 (RC) and 105–108 (GDGS) contribute to the ATP site. D106 is a binding site for Mg(2+). 129-131 (TID) lines the substrate pocket. D131 (proton acceptor) is an active-site residue. R158 contacts ADP. Residues R166 and 173–175 (MGR) contribute to the substrate site. ADP is bound by residues 189–191 (GAE), K215, and 217–219 (KNS). Substrate-binding positions include E226, R250, and 256 to 259 (HLQR).

This sequence belongs to the phosphofructokinase type A (PFKA) family. ATP-dependent PFK group I subfamily. Prokaryotic clade 'B1' sub-subfamily. In terms of assembly, homotetramer. Requires Mg(2+) as cofactor.

The protein resides in the cytoplasm. It carries out the reaction beta-D-fructose 6-phosphate + ATP = beta-D-fructose 1,6-bisphosphate + ADP + H(+). It functions in the pathway carbohydrate degradation; glycolysis; D-glyceraldehyde 3-phosphate and glycerone phosphate from D-glucose: step 3/4. With respect to regulation, allosterically activated by ADP and other diphosphonucleosides, and allosterically inhibited by phosphoenolpyruvate. Its function is as follows. Catalyzes the phosphorylation of D-fructose 6-phosphate to fructose 1,6-bisphosphate by ATP, the first committing step of glycolysis. The sequence is that of ATP-dependent 6-phosphofructokinase 2 from Bacteroides thetaiotaomicron (strain ATCC 29148 / DSM 2079 / JCM 5827 / CCUG 10774 / NCTC 10582 / VPI-5482 / E50).